A 476-amino-acid chain; its full sequence is MDEAWERAVEAALQAAGEGSSSPARSLTLDGAVKCLHGRLPAAEILERYQSLEHLSIAGVGVASLAGFPRLRNLTRLTLSDNRIAGGLDHLVAAGLASLRDLDLSNNRIQDVGDLSPLANLRLVSLDLYECPVTRVKDYRSKVFGMIRTLKYLDKMDADENERPESDDDDDDGDGDGDGEEEEDDDDDEDEDPGSGEVANGGVSHPRGGVASHPVEVNGVIDVDEDESDADEVVPNGGDEHHANGFRVAAVGDEDEYVEEEDDDDEEDYEEEDDLGEEIDEDGDDEDAVVEVHDVPSSSDEEEDGIEEEDEEEDEDEEEVEDDGEEAEPESSGRVALAVGDVGEEIDGHEHGEGEDEDENGEIGEEDEERLEDDRVYEEGNDDDEEDVDDEDEDTEYLVQPIAQPQAMAVGNDFDAAEADDADEDRDEVDDDDDGGTDLPSSSQGAKRKRDDDPSGSGDDDEDDDGVEDLRPFKHH.

3 LRR repeats span residues 51 to 72 (SLEH…PRLR), 73 to 92 (NLTR…DHLV), and 98 to 119 (SLRD…SPLA). The LRRCT domain occupies 131–169 (CPVTRVKDYRSKVFGMIRTLKYLDKMDADENERPESDDD). The tract at residues 157 to 476 (DADENERPES…VEDLRPFKHH (320 aa)) is disordered. Composition is skewed to acidic residues over residues 165 to 194 (ESDD…EDPG), 222 to 232 (DVDEDESDADE), 252 to 289 (GDED…EDAV), 299 to 329 (SDEE…EAEP), 353 to 371 (EGED…EERL), 379 to 396 (EGND…EDTE), 415 to 436 (DAAE…DDGG), and 458 to 467 (GDDDEDDDGV).

Belongs to the ANP32 family.

The chain is Acidic leucine-rich nuclear phosphoprotein 32-related protein 1 from Oryza sativa subsp. japonica (Rice).